Consider the following 287-residue polypeptide: Probable 3-hydroxybutyryl-CoA dehydrogenase (287 aa).

Belongs to the 3-hydroxyacyl-CoA dehydrogenase family.

The enzyme catalyses (3S)-3-hydroxybutanoyl-CoA + NADP(+) = acetoacetyl-CoA + NADPH + H(+). It participates in lipid metabolism; butanoate metabolism. This Bacillus subtilis (strain 168) protein is Probable 3-hydroxybutyryl-CoA dehydrogenase (mmgB).